A 981-amino-acid polypeptide reads, in one-letter code: Probable NAD kinase 2, chloroplastic (981 aa).

Positions 319–364 are calmodulin-binding; the sequence is APSAEQVQRFAEIVSDSAKKPIYLHSQEGISRTSAMVSRWKQYVTR. 2 disordered regions span residues 369–413 and 551–601; these read ATQN…DRTM and TNGK…AERN. Composition is skewed to polar residues over residues 387–406, 551–563, and 581–596; these read TEQLTNSPGFSSEGSENGTP, TNGKPSNNGASTS, and SDTSNSNGNAPLGSQK.

The protein belongs to the NAD kinase family.

It is found in the plastid. Its subcellular location is the chloroplast. It catalyses the reaction NAD(+) + ATP = ADP + NADP(+) + H(+). In terms of biological role, involved in chlorophyll synthesis and chloroplast protection against oxidative damage. The protein is Probable NAD kinase 2, chloroplastic of Oryza sativa subsp. japonica (Rice).